A 271-amino-acid chain; its full sequence is Putative phosphoenolpyruvate synthase regulatory protein (271 aa).

151-158 (GVSRSGKT) contacts ADP.

It belongs to the pyruvate, phosphate/water dikinase regulatory protein family. PSRP subfamily.

It carries out the reaction [pyruvate, water dikinase] + ADP = [pyruvate, water dikinase]-phosphate + AMP + H(+). The catalysed reaction is [pyruvate, water dikinase]-phosphate + phosphate + H(+) = [pyruvate, water dikinase] + diphosphate. Bifunctional serine/threonine kinase and phosphorylase involved in the regulation of the phosphoenolpyruvate synthase (PEPS) by catalyzing its phosphorylation/dephosphorylation. The chain is Putative phosphoenolpyruvate synthase regulatory protein from Burkholderia lata (strain ATCC 17760 / DSM 23089 / LMG 22485 / NCIMB 9086 / R18194 / 383).